The chain runs to 400 residues: 1-deoxy-D-xylulose 5-phosphate reductoisomerase (400 aa).

Positions 10, 11, 12, 13, 36, 38, and 124 each coordinate NADPH. Position 125 (lysine 125) interacts with 1-deoxy-D-xylulose 5-phosphate. Glutamate 126 contributes to the NADPH binding site. Position 150 (aspartate 150) interacts with Mn(2+). 1-deoxy-D-xylulose 5-phosphate is bound by residues serine 151, glutamate 152, serine 186, and histidine 209. Glutamate 152 lines the Mn(2+) pocket. Glycine 215 lines the NADPH pocket. Serine 222, asparagine 227, lysine 228, and glutamate 231 together coordinate 1-deoxy-D-xylulose 5-phosphate. Glutamate 231 lines the Mn(2+) pocket.

This sequence belongs to the DXR family. It depends on Mg(2+) as a cofactor. Requires Mn(2+) as cofactor.

The enzyme catalyses 2-C-methyl-D-erythritol 4-phosphate + NADP(+) = 1-deoxy-D-xylulose 5-phosphate + NADPH + H(+). The protein operates within isoprenoid biosynthesis; isopentenyl diphosphate biosynthesis via DXP pathway; isopentenyl diphosphate from 1-deoxy-D-xylulose 5-phosphate: step 1/6. Its function is as follows. Catalyzes the NADPH-dependent rearrangement and reduction of 1-deoxy-D-xylulose-5-phosphate (DXP) to 2-C-methyl-D-erythritol 4-phosphate (MEP). This Aliivibrio fischeri (strain MJ11) (Vibrio fischeri) protein is 1-deoxy-D-xylulose 5-phosphate reductoisomerase.